The following is a 135-amino-acid chain: MNRLQLFSKGLRLIHKMSEEALAGVPLVHISPEGIFKYVLINVIDGGDASKAVVRGFDDCTWHADIFDREEEVFKKLGLRAECPGGGRIEHNPEKKYLKVYGYSQGFGKADHAQTKRILATKYPDYTIETSDEGY.

Residue Lys37 participates in substrate binding. His63 functions as the Proton acceptor in the catalytic mechanism. Position 104–106 (104–106) interacts with substrate; sequence SQG.

Belongs to the janus family.

Functionally, janA and janB regulate somatic sex differentiation. This Drosophila yakuba (Fruit fly) protein is Sex-regulated protein janus-A (janA).